Consider the following 160-residue polypeptide: uncharacterized protein (160 aa).

A helical transmembrane segment spans residues 8–28; the sequence is LLFILVFISGFILFTVYSYTA.

Its subcellular location is the membrane. This is an uncharacterized protein from Escherichia coli (strain K12).